Consider the following 377-residue polypeptide: Glutamate 5-kinase (377 aa).

Lys-20 is a binding site for ATP. 3 residues coordinate substrate: Ser-59, Asp-146, and Asn-158. ATP contacts are provided by residues 178 to 179 (SD) and 220 to 226 (TGGMSTK). In terms of domain architecture, PUA spans 285-363 (RGTLTVDAGA…ADIEAVLGYR (79 aa)).

This sequence belongs to the glutamate 5-kinase family.

It localises to the cytoplasm. It catalyses the reaction L-glutamate + ATP = L-glutamyl 5-phosphate + ADP. The protein operates within amino-acid biosynthesis; L-proline biosynthesis; L-glutamate 5-semialdehyde from L-glutamate: step 1/2. In terms of biological role, catalyzes the transfer of a phosphate group to glutamate to form L-glutamate 5-phosphate. The polypeptide is Glutamate 5-kinase (Myxococcus xanthus (strain DK1622)).